The sequence spans 126 residues: MSNVPAELKYTDEHEWIRTEADGTLTVGITDHAQSTLGDIVFLELPEVGKSVNAGDAVGVVESVKAASDIYSPVSGEIVAINEAATDAPEEVNGDAYGVWLFKIKLAAGASTDKLIDADAYSKLID.

In terms of domain architecture, Lipoyl-binding spans 24–105 (TLTVGITDHA…AYGVWLFKIK (82 aa)). An N6-lipoyllysine modification is found at K65.

It belongs to the GcvH family. In terms of assembly, the glycine cleavage system is composed of four proteins: P, T, L and H. The cofactor is (R)-lipoate.

In terms of biological role, the glycine cleavage system catalyzes the degradation of glycine. The H protein shuttles the methylamine group of glycine from the P protein to the T protein. The chain is Glycine cleavage system H protein from Burkholderia cenocepacia (strain ATCC BAA-245 / DSM 16553 / LMG 16656 / NCTC 13227 / J2315 / CF5610) (Burkholderia cepacia (strain J2315)).